A 25-amino-acid chain; its full sequence is MFEISFYIALKNFNSLGILKMWRFI.

The protein resides in the plastid. It localises to the chloroplast. This is an uncharacterized protein from Trieres chinensis (Marine centric diatom).